Consider the following 146-residue polypeptide: MHPAHLLVLLAVCVSLLGASDIPPLPLNLAQFGFMIRCANGGSRSPLDYTDYGCYCGKGGRGTPVDDLDRCCQVHDECYGEAEKRLGCSPFVTLYSWKCYGKAPSCNTKTDCQRFVCNCDAKAAECFARSPYQKKNWNINTKARCK.

An N-terminal signal peptide occupies residues 1-27 (MHPAHLLVLLAVCVSLLGASDIPPLPL). 7 disulfides stabilise this stretch: Cys38-Cys99, Cys54-Cys145, Cys56-Cys72, Cys71-Cys126, Cys78-Cys119, Cys88-Cys112, and Cys106-Cys117. Ca(2+) is bound by residues Tyr55, Gly57, and Gly59. The active site involves His75. Asp76 is a binding site for Ca(2+). Asp120 is a catalytic residue.

It belongs to the phospholipase A2 family. Group I subfamily. D49 sub-subfamily. As to quaternary structure, monomer. Ca(2+) is required as a cofactor. As to expression, expressed by the venom gland.

The protein localises to the secreted. It carries out the reaction a 1,2-diacyl-sn-glycero-3-phosphocholine + H2O = a 1-acyl-sn-glycero-3-phosphocholine + a fatty acid + H(+). In terms of biological role, snake venom phospholipase A2 (PLA2) that shows high presynaptic neurotoxicity in vertebrata that is independent of catalytic activity, as well as local myotoxicity when intramuscularly injected into mice. Blocks acetylcholine release in Aplysia neurons, and potentiates pro-inflammatory cellular signaling. Potentiates glutamate excitoxicity when coinjected into brain of rats. May act by binding in a calcium-dependent fashion and with high affinity to a neuronal-type (N-type) PLA2 receptor, and with very high affinity to a muscle-type (M-type) PLA2 receptor. In vitro, shows a high-specific activity on E.coli membranes and is more efficient on the anionic phospholipid POPG than on the anionic phospholipid POPS or the zwitterionic phospholipid POPC. Exerts catalytically-independent anti-HIV (IC(50) is 35 nM) activity and catalytically-dependent antimalarial activity (IC(50) is 3.1 nM when tested on P.falciparum grown in serum that contains lipoproteins). PLA2 catalyzes the calcium-dependent hydrolysis of the 2-acyl groups in 3-sn-phosphoglycerides. In Oxyuranus scutellatus scutellatus (Australian taipan), this protein is Phospholipase A2 OS2.